A 536-amino-acid polypeptide reads, in one-letter code: Inactive phospholipase D5 (536 aa).

Over 1 to 68 (MEIRQHEWLS…DKLEHSQQKC (68 aa)) the chain is Cytoplasmic. A helical transmembrane segment spans residues 69–89 (IVIFALVCCFAVLVALIFSAV). The Extracellular portion of the chain corresponds to 90–536 (DIMGEDEDGL…NATGREPLSV (447 aa)). An N-linked (GlcNAc...) asparagine glycan is attached at N121. Residues 215-242 (NKGRLQSSFWIVDKQHVYIGSAGLDWRS) enclose the PLD phosphodiesterase 1 domain. N302 carries N-linked (GlcNAc...) asparagine glycosylation. A PLD phosphodiesterase 2 domain is found at 434–460 (FPKLNRNKYMVTDGAAYIGNFDWVGND). Residues 503–536 (QPTKQPNCSSLSKLKSPSKQPAMANATGREPLSV) form a disordered region. Positions 511–521 (SSLSKLKSPSK) are enriched in low complexity.

It belongs to the phospholipase D family.

The protein localises to the membrane. The polypeptide is Inactive phospholipase D5 (Pld5) (Mus musculus (Mouse)).